The primary structure comprises 307 residues: UPF0749 protein MT1871 (307 aa).

An N-terminal signal peptide occupies residues 1–23 (MAESDRLLGGYDPNAGYSAHAGA). 2 helical membrane passes run 67 to 87 (VSWMWQALAATLVAAVFAAAV) and 152 to 172 (VLSLAAASAPVVGPGLTVTVT).

This sequence belongs to the UPF0749 family.

Its subcellular location is the cell membrane. The protein is UPF0749 protein MT1871 of Mycobacterium tuberculosis (strain CDC 1551 / Oshkosh).